The sequence spans 476 residues: Proline--tRNA ligase 2 (476 aa).

Belongs to the class-II aminoacyl-tRNA synthetase family. ProS type 3 subfamily. In terms of assembly, homodimer.

Its subcellular location is the cytoplasm. It catalyses the reaction tRNA(Pro) + L-proline + ATP = L-prolyl-tRNA(Pro) + AMP + diphosphate. Its function is as follows. Catalyzes the attachment of proline to tRNA(Pro) in a two-step reaction: proline is first activated by ATP to form Pro-AMP and then transferred to the acceptor end of tRNA(Pro). This is Proline--tRNA ligase 2 from Bacillus cereus (strain ZK / E33L).